A 1156-amino-acid polypeptide reads, in one-letter code: Pesticidal crystal protein Cry9Aa (1156 aa).

Residues 1–23 (MNQNKHGIIGASNCGCASDDVAK) constitute a propeptide, removed in mature form.

The protein belongs to the delta endotoxin family.

Promotes colloidosmotic lysis by binding to the midgut epithelial cells of insects. This protein is toxic to Galleria mellonella. This is Pesticidal crystal protein Cry9Aa (cry9Aa) from Bacillus thuringiensis subsp. galleriae.